The primary structure comprises 165 residues: Nucleotide-binding protein Rcas_1283 (165 aa).

This sequence belongs to the YajQ family.

Its function is as follows. Nucleotide-binding protein. This chain is Nucleotide-binding protein Rcas_1283, found in Roseiflexus castenholzii (strain DSM 13941 / HLO8).